A 315-amino-acid chain; its full sequence is Methionyl-tRNA formyltransferase (315 aa).

(6S)-5,6,7,8-tetrahydrofolate is bound at residue 107 to 110 (SLLP).

Belongs to the Fmt family.

It catalyses the reaction L-methionyl-tRNA(fMet) + (6R)-10-formyltetrahydrofolate = N-formyl-L-methionyl-tRNA(fMet) + (6S)-5,6,7,8-tetrahydrofolate + H(+). Functionally, attaches a formyl group to the free amino group of methionyl-tRNA(fMet). The formyl group appears to play a dual role in the initiator identity of N-formylmethionyl-tRNA by promoting its recognition by IF2 and preventing the misappropriation of this tRNA by the elongation apparatus. This is Methionyl-tRNA formyltransferase from Borreliella afzelii (strain PKo) (Borrelia afzelii).